The sequence spans 128 residues: Small ribosomal subunit protein bS6 (128 aa).

Belongs to the bacterial ribosomal protein bS6 family.

Functionally, binds together with bS18 to 16S ribosomal RNA. The chain is Small ribosomal subunit protein bS6 (rpsF) from Thermotoga maritima (strain ATCC 43589 / DSM 3109 / JCM 10099 / NBRC 100826 / MSB8).